A 61-amino-acid chain; its full sequence is Small ribosomal subunit protein uS14 (61 aa).

Positions 24, 27, 40, and 43 each coordinate Zn(2+).

It belongs to the universal ribosomal protein uS14 family. Zinc-binding uS14 subfamily. Part of the 30S ribosomal subunit. Contacts proteins S3 and S10. Zn(2+) is required as a cofactor.

In terms of biological role, binds 16S rRNA, required for the assembly of 30S particles and may also be responsible for determining the conformation of the 16S rRNA at the A site. This is Small ribosomal subunit protein uS14 from Thermotoga neapolitana (strain ATCC 49049 / DSM 4359 / NBRC 107923 / NS-E).